Consider the following 366-residue polypeptide: NADH-quinone oxidoreductase subunit D (366 aa).

The protein belongs to the complex I 49 kDa subunit family. NDH-1 is composed of 14 different subunits. Subunits NuoB, C, D, E, F, and G constitute the peripheral sector of the complex.

It localises to the cell membrane. It carries out the reaction a quinone + NADH + 5 H(+)(in) = a quinol + NAD(+) + 4 H(+)(out). NDH-1 shuttles electrons from NADH, via FMN and iron-sulfur (Fe-S) centers, to quinones in the respiratory chain. The immediate electron acceptor for the enzyme in this species is believed to be a menaquinone. Couples the redox reaction to proton translocation (for every two electrons transferred, four hydrogen ions are translocated across the cytoplasmic membrane), and thus conserves the redox energy in a proton gradient. This Desulforamulus reducens (strain ATCC BAA-1160 / DSM 100696 / MI-1) (Desulfotomaculum reducens) protein is NADH-quinone oxidoreductase subunit D.